Consider the following 136-residue polypeptide: Protein NrdI (136 aa).

It belongs to the NrdI family.

Probably involved in ribonucleotide reductase function. The protein is Protein NrdI of Klebsiella pneumoniae subsp. pneumoniae (strain ATCC 700721 / MGH 78578).